Consider the following 463-residue polypeptide: Toxin CaTX-A (463 aa).

Positions 1–18 are cleaved as a signal peptide; the sequence is MSRGYSLHLVLFLVLSTA.

It belongs to the jellyfish toxin family. Type II subfamily. Oligomer. Contains disulfide bonds. As to expression, it is suggested that CaTX-B is synthesized in the tentacle, is modified (become CaTX-A) and then migrates to the nematocyst.

It is found in the secreted. Its subcellular location is the nematocyst. The protein resides in the target cell membrane. In terms of biological role, has potent hemolytic activity. Is lethal to crayfish. Causes cutaneous inflammation in humans. May act as a pore-forming toxin, disrupting normal transmembrane ion concentration gradients in susceptible cells. This is Toxin CaTX-A from Carybdea alata (Hawaiian box jellyfish).